Consider the following 468-residue polypeptide: Purple acid phosphatase 10 (468 aa).

A signal peptide spans 1-25 (MGRVRKSDFGSIVLVLCCVLNSLLC). Asparagine 95 and asparagine 113 each carry an N-linked (GlcNAc...) asparagine glycan. Aspartate 167 serves as a coordination point for Fe cation. Asparagine 175 carries N-linked (GlcNAc...) asparagine glycosylation. Aspartate 196 and tyrosine 199 together coordinate Fe cation. Aspartate 196 serves as a coordination point for Zn(2+). Asparagine 233 contributes to the Zn(2+) binding site. Asparagine 233 provides a ligand contact to substrate. N-linked (GlcNAc...) asparagine glycosylation is present at asparagine 306. Residue histidine 318 coordinates Zn(2+). The Proton donor role is filled by histidine 328. Histidine 355 is a binding site for Zn(2+). 355-357 (HVH) contacts substrate. Histidine 357 provides a ligand contact to Fe cation. The N-linked (GlcNAc...) asparagine glycan is linked to asparagine 428.

This sequence belongs to the metallophosphoesterase superfamily. Purple acid phosphatase family. Homodimer; disulfide-linked. Requires Fe cation as cofactor. It depends on Zn(2+) as a cofactor. In terms of tissue distribution, expressed in roots, stems, leaves, flowers and siliques.

The protein localises to the secreted. It is found in the cytoplasm. It carries out the reaction a phosphate monoester + H2O = an alcohol + phosphate. This is Purple acid phosphatase 10 (PAP10) from Arabidopsis thaliana (Mouse-ear cress).